The primary structure comprises 445 residues: C-terminal-binding protein 2 (445 aa).

Asymmetric dimethylarginine is present on Arg-22. NAD(+) is bound by residues Ser-106, Ile-186–Thr-191, Asp-210, Cys-243–Asn-249, Ala-270–Arg-272, and Asp-296. The active site involves Arg-272. The active site involves Glu-301. The active-site Proton donor is His-321. Residue His-321 to Trp-324 coordinates NAD(+). Residues Thr-414–Gln-445 form a disordered region. Ser-428 carries the post-translational modification Phosphoserine. Residues Lys-434–Gln-445 are compositionally biased toward basic and acidic residues.

The protein belongs to the D-isomer specific 2-hydroxyacid dehydrogenase family. As to quaternary structure, interacts with the C-terminus of adenovirus E1A protein. Can form homodimers or heterodimers of CTBP1 and CTBP2. Interacts with HIPK2. Interacts with ZNF217, PNN, NRIP1 and WIZ. Interacts with PRDM16; represses white adipose tissue (WAT)-specific genes expression. Interacts with MCRIP1. As to expression, isoform 2 is specifically localized in synaptic ribbon (at protein level).

The protein localises to the nucleus. Its subcellular location is the synapse. Functionally, corepressor targeting diverse transcription regulators. Functions in brown adipose tissue (BAT) differentiation. Isoform 2 probably acts as a scaffold for specialized synapses. This chain is C-terminal-binding protein 2 (CTBP2), found in Bos taurus (Bovine).